The chain runs to 200 residues: Glycosyl hydrolase family 19 domain-containing protein HI_1415 (200 aa).

Belongs to the glycosyl hydrolase 19 family.

The sequence is that of Glycosyl hydrolase family 19 domain-containing protein HI_1415 from Haemophilus influenzae (strain ATCC 51907 / DSM 11121 / KW20 / Rd).